Reading from the N-terminus, the 481-residue chain is 2-methylisoborneol synthase (481 aa).

Disordered regions lie at residues 1 to 125 (MPDS…PVGP) and 139 to 160 (QAAVPPDAVPAPSGPSAEGPVV). The segment covering 11 to 23 (TSLPEQPPAPPAT) has biased composition (pro residues). A compositionally biased stretch (low complexity) spans 24 to 33 (APDAPAATVT). 2 stretches are compositionally biased toward pro residues: residues 52–64 (VTRPSSPPSPSMP) and 71–104 (SSPPSSSMPPASWAPPSPLSPPAPSLPPTSPPAT). The segment covering 105–114 (APETSAATGS) has biased composition (low complexity). Positions 238, 239, 243, 386, 390, and 394 each coordinate Mg(2+).

Belongs to the terpene synthase family. 2-methylisoborneol synthase subfamily. Requires Mg(2+) as cofactor.

The enzyme catalyses (E)-2-methylgeranyl diphosphate + H2O = 2-methylisoborneol + diphosphate. Catalyzes the cyclization of 2-methylgeranyl diphosphate (2-MeGPP) to 2-methylisoborneol (2-MIB), which likely involves the intermediacy of 2-methyllinalyl diphosphate. The chain is 2-methylisoborneol synthase (tpc) from Streptomyces lasalocidi (Streptomyces lasaliensis).